We begin with the raw amino-acid sequence, 267 residues long: 4-hydroxy-tetrahydrodipicolinate reductase (267 aa).

Position 8–13 (8–13 (GASGRM)) interacts with NAD(+). Arg35 lines the NADP(+) pocket. NAD(+) is bound by residues 98–100 (GTT) and 122–125 (APNM). The active-site Proton donor/acceptor is His155. Residue His156 coordinates (S)-2,3,4,5-tetrahydrodipicolinate. The active-site Proton donor is the Lys159. 165–166 (GT) serves as a coordination point for (S)-2,3,4,5-tetrahydrodipicolinate.

The protein belongs to the DapB family.

Its subcellular location is the cytoplasm. The catalysed reaction is (S)-2,3,4,5-tetrahydrodipicolinate + NAD(+) + H2O = (2S,4S)-4-hydroxy-2,3,4,5-tetrahydrodipicolinate + NADH + H(+). The enzyme catalyses (S)-2,3,4,5-tetrahydrodipicolinate + NADP(+) + H2O = (2S,4S)-4-hydroxy-2,3,4,5-tetrahydrodipicolinate + NADPH + H(+). Its pathway is amino-acid biosynthesis; L-lysine biosynthesis via DAP pathway; (S)-tetrahydrodipicolinate from L-aspartate: step 4/4. Its function is as follows. Catalyzes the conversion of 4-hydroxy-tetrahydrodipicolinate (HTPA) to tetrahydrodipicolinate. This is 4-hydroxy-tetrahydrodipicolinate reductase from Hahella chejuensis (strain KCTC 2396).